Reading from the N-terminus, the 332-residue chain is MKKHAKVYYSENLVEQVNEFETSFEIKPLERGLGNTLGNALRRTVLSSIPSCAVFGVKIEGIKHEFTVLDDVIEDVVTILNNLKRVRFFYNPSVFSQNSIHVASFLGQKAGQIYARDIESHSGLKIVNPDLYIADVSKVGALKFELFITNGKGFVDFETNKKYVNEVISRLESQIEGSVLAVDSDFSPVLNANYQAVEINSASPIIEEKLNFSIKTDGSIFAKDALSQGAKILIAHLNLLADVENLNKFSADFFGDQEIKEEPIRRFSNSIDALDLSVRSLNALRRAQYYKISDIEKLSQDDFENIKNLGRKSVQEIMEKLQNYKNENKGEN.

An alpha N-terminal domain (alpha-NTD) region spans residues 1-244 (MKKHAKVYYS…AHLNLLADVE (244 aa)). Residues 259 to 332 (IKEEPIRRFS…NYKNENKGEN (74 aa)) are alpha C-terminal domain (alpha-CTD).

It belongs to the RNA polymerase alpha chain family. In terms of assembly, homodimer. The RNAP catalytic core consists of 2 alpha, 1 beta, 1 beta' and 1 omega subunit. When a sigma factor is associated with the core the holoenzyme is formed, which can initiate transcription.

The catalysed reaction is RNA(n) + a ribonucleoside 5'-triphosphate = RNA(n+1) + diphosphate. Functionally, DNA-dependent RNA polymerase catalyzes the transcription of DNA into RNA using the four ribonucleoside triphosphates as substrates. The chain is DNA-directed RNA polymerase subunit alpha from Mesomycoplasma hyopneumoniae (strain 7448) (Mycoplasma hyopneumoniae).